Here is a 209-residue protein sequence, read N- to C-terminus: Uracil phosphoribosyltransferase (209 aa).

5-phospho-alpha-D-ribose 1-diphosphate-binding positions include Arg-79, Arg-104, and 131–139; that span reads DPMLATGGS. Uracil is bound by residues Ile-194 and 199-201; that span reads GDA. A 5-phospho-alpha-D-ribose 1-diphosphate-binding site is contributed by Asp-200.

The protein belongs to the UPRTase family. The cofactor is Mg(2+).

The enzyme catalyses UMP + diphosphate = 5-phospho-alpha-D-ribose 1-diphosphate + uracil. The protein operates within pyrimidine metabolism; UMP biosynthesis via salvage pathway; UMP from uracil: step 1/1. With respect to regulation, allosterically activated by GTP. Its function is as follows. Catalyzes the conversion of uracil and 5-phospho-alpha-D-ribose 1-diphosphate (PRPP) to UMP and diphosphate. The polypeptide is Uracil phosphoribosyltransferase (Lacticaseibacillus paracasei (strain ATCC 334 / BCRC 17002 / CCUG 31169 / CIP 107868 / KCTC 3260 / NRRL B-441) (Lactobacillus paracasei)).